The following is a 77-amino-acid chain: Cell division topological specificity factor (77 aa).

Belongs to the MinE family.

Its function is as follows. Prevents the cell division inhibition by proteins MinC and MinD at internal division sites while permitting inhibition at polar sites. This ensures cell division at the proper site by restricting the formation of a division septum at the midpoint of the long axis of the cell. The protein is Cell division topological specificity factor of Helicobacter pylori (strain HPAG1).